Reading from the N-terminus, the 108-residue chain is uncharacterized protein (108 aa).

The tract at residues 75–94 is disordered; sequence TPQVSSFPSSTTSLSHSCTT. The segment covering 79 to 94 has biased composition (low complexity); that stretch reads SSFPSSTTSLSHSCTT.

This is an uncharacterized protein from Homo sapiens (Human).